The sequence spans 74 residues: Large ribosomal subunit protein bL31 (74 aa).

4 residues coordinate Zn(2+): cysteine 16, cysteine 18, cysteine 38, and cysteine 41.

Belongs to the bacterial ribosomal protein bL31 family. Type A subfamily. As to quaternary structure, part of the 50S ribosomal subunit. Requires Zn(2+) as cofactor.

Binds the 23S rRNA. This Acinetobacter baumannii (strain AB307-0294) protein is Large ribosomal subunit protein bL31.